A 383-amino-acid chain; its full sequence is Proton extrusion protein PxcA (383 aa).

A run of 4 helical transmembrane segments spans residues 163–183 (ILLLLILVPLLIQQVAGAYII), 258–278 (AVKNVFSDLSALIAFTVVCFA), 306–326 (IILFTDIFVGFHSPEGWTVLL), and 341–361 (FVMLFIATFPVILATIFKYWI).

This sequence belongs to the CemA family.

It localises to the cell inner membrane. Its function is as follows. Required for H(+) efflux immediately after light irradiation to form a rapid H(+) concentration gradient across the thylakoid membranes. Together with PxcL, contributes to transient H(+) uptake following dark to light transition. This chain is Proton extrusion protein PxcA, found in Synechococcus sp. (strain CC9902).